Reading from the N-terminus, the 617-residue chain is tRNA uridine 5-carboxymethylaminomethyl modification enzyme MnmG (617 aa).

FAD-binding positions include 9–14, Val-120, and Thr-175; that span reads GAGHAG. NAD(+) is bound at residue 267 to 281; the sequence is GPRYCPSIEDKVVRF. Gln-364 serves as a coordination point for FAD.

Belongs to the MnmG family. In terms of assembly, homodimer. Heterotetramer of two MnmE and two MnmG subunits. It depends on FAD as a cofactor.

It is found in the cytoplasm. Functionally, NAD-binding protein involved in the addition of a carboxymethylaminomethyl (cmnm) group at the wobble position (U34) of certain tRNAs, forming tRNA-cmnm(5)s(2)U34. The protein is tRNA uridine 5-carboxymethylaminomethyl modification enzyme MnmG of Onion yellows phytoplasma (strain OY-M).